We begin with the raw amino-acid sequence, 181 residues long: Protein Abitram (181 aa).

This sequence belongs to the ABITRAM family. As to quaternary structure, interacts with F-actin. Interacts with G-actin.

It localises to the nucleus speckle. The protein resides in the cell projection. It is found in the lamellipodium. The protein localises to the nucleus. Its subcellular location is the growth cone. It localises to the dendrite. In terms of biological role, actin-binding protein that regulates actin polymerization, filopodia dynamics and increases the branching of proximal dendrites of developing neurons. The protein is Protein Abitram of Homo sapiens (Human).